Consider the following 356-residue polypeptide: Phenylalanine--tRNA ligase alpha subunit (356 aa).

Residue glutamate 260 participates in Mg(2+) binding.

It belongs to the class-II aminoacyl-tRNA synthetase family. Phe-tRNA synthetase alpha subunit type 1 subfamily. As to quaternary structure, tetramer of two alpha and two beta subunits. Mg(2+) serves as cofactor.

It is found in the cytoplasm. It carries out the reaction tRNA(Phe) + L-phenylalanine + ATP = L-phenylalanyl-tRNA(Phe) + AMP + diphosphate + H(+). This Gluconacetobacter diazotrophicus (strain ATCC 49037 / DSM 5601 / CCUG 37298 / CIP 103539 / LMG 7603 / PAl5) protein is Phenylalanine--tRNA ligase alpha subunit.